A 147-amino-acid polypeptide reads, in one-letter code: Putative 2'-deoxynucleoside 5'-phosphate N-hydrolase 1 (147 aa).

Substrate-binding positions include 10–16 (YFCGSIR), Tyr-25, His-42, Glu-90, and 114–116 (SAM).

Belongs to the 2'-deoxynucleoside 5'-phosphate N-hydrolase 1 family. As to quaternary structure, monomer and homodimer.

Its subcellular location is the cytoplasm. The protein localises to the nucleus. It carries out the reaction a pyrimidine 2'-deoxyribonucleoside 5'-phosphate + H2O = a pyrimidine nucleobase + 2-deoxy-D-ribose 5-phosphate. The enzyme catalyses a purine 2'-deoxyribonucleoside 5'-phosphate + H2O = a purine nucleobase + 2-deoxy-D-ribose 5-phosphate. In terms of biological role, catalyzes the cleavage of the N-glycosidic bond of deoxyribonucleoside 5'-monophosphates to yield deoxyribose 5-phosphate and a purine or pyrimidine base. The sequence is that of Putative 2'-deoxynucleoside 5'-phosphate N-hydrolase 1 from Nematostella vectensis (Starlet sea anemone).